Reading from the N-terminus, the 145-residue chain is Deoxyuridine 5'-triphosphate nucleotidohydrolase (145 aa).

Substrate is bound by residues 62-64, Asn-75, and 79-81; these read RSG and TVD.

It belongs to the dUTPase family. Requires Mg(2+) as cofactor.

It catalyses the reaction dUTP + H2O = dUMP + diphosphate + H(+). The protein operates within pyrimidine metabolism; dUMP biosynthesis; dUMP from dCTP (dUTP route): step 2/2. Its function is as follows. This enzyme is involved in nucleotide metabolism: it produces dUMP, the immediate precursor of thymidine nucleotides and it decreases the intracellular concentration of dUTP so that uracil cannot be incorporated into DNA. This is Deoxyuridine 5'-triphosphate nucleotidohydrolase from Gloeothece citriformis (strain PCC 7424) (Cyanothece sp. (strain PCC 7424)).